An 88-amino-acid polypeptide reads, in one-letter code: Small ribosomal subunit protein uS15c (88 aa).

The protein belongs to the universal ribosomal protein uS15 family. In terms of assembly, part of the 30S ribosomal subunit.

It is found in the plastid. The protein resides in the chloroplast. This is Small ribosomal subunit protein uS15c (rps15) from Aethionema cordifolium (Lebanon stonecress).